Reading from the N-terminus, the 114-residue chain is Large ribosomal subunit protein bL20 (114 aa).

This sequence belongs to the bacterial ribosomal protein bL20 family.

Binds directly to 23S ribosomal RNA and is necessary for the in vitro assembly process of the 50S ribosomal subunit. It is not involved in the protein synthesizing functions of that subunit. This Anaeromyxobacter dehalogenans (strain 2CP-C) protein is Large ribosomal subunit protein bL20.